We begin with the raw amino-acid sequence, 63 residues long: Large ribosomal subunit protein bL28 (63 aa).

The protein belongs to the bacterial ribosomal protein bL28 family.

In Syntrophotalea carbinolica (strain DSM 2380 / NBRC 103641 / GraBd1) (Pelobacter carbinolicus), this protein is Large ribosomal subunit protein bL28.